A 377-amino-acid chain; its full sequence is Guanine nucleotide-binding protein subunit beta (377 aa).

WD repeat units follow at residues 63-93 (GHTG…IVWN), 105-135 (LPCA…SIFN), 154-185 (GHKG…VLWD), 202-233 (GHTA…RLWD), 246-276 (GHES…RLFD), 293-323 (GDIP…YVWD), and 339-369 (SHEG…KIWA).

The protein belongs to the WD repeat G protein beta family. In terms of assembly, g proteins are composed of 3 units, alpha, beta and gamma.

Functionally, guanine nucleotide-binding proteins (G proteins) are involved as a modulator or transducer in various transmembrane signaling systems. The beta and gamma chains are required for the GTPase activity, for replacement of GDP by GTP, and for G protein-effector interaction. The sequence is that of Guanine nucleotide-binding protein subunit beta (GB1) from Solanum tuberosum (Potato).